Reading from the N-terminus, the 446-residue chain is Chromosomal replication initiator protein DnaA (446 aa).

The segment at 1 to 82 (MENILDLWNQ…ELSIKFVIPQ (82 aa)) is domain I, interacts with DnaA modulators. Residues 83-103 (NQDVEDFMPKPQVKKAVKEDT) form a domain II region. The segment at 104–332 (SDFPQNMLNP…VAYSSLINKD (229 aa)) is domain III, AAA+ region. Residues Gly154, Leu155, Gly156, Lys157, and Thr158 each contribute to the ATP site. Thr158 is a Mg(2+) binding site. The Initiator specific motif (ISM) signature appears at 182 to 206 (SEKFTNEFINSIRDNKAVDFRNRYR). Residues Asp214 and Asp215 each contribute to the Mg(2+) site. Residues 333–346 (INADLAAEALKDII) are linker. Residues 347–446 (PSSKPKVITI…HVKEIKEQLK (100 aa)) form a domain IV, binds dsDNA region.

Belongs to the DnaA family. As to quaternary structure, the DNA replisome assembles sequentially on oriC in this order; DnaA, DnaD, DnaB, DnaI-DnaC helicase. Oligomerizes as a right-handed, spiral filament on DNA at oriC. Forms an ATP-dependent helix on DNA at oriC; both DnaD and YabA inhibit formation of the DnaA helix. Forms an ATP-dependent oligomer, formation is stimulated by ds- and ssDNA; monomeric ADP-Soj inhibits oligomer formation. Interacts with DnaD. Interacts with YabA, and via YabA, with the replication machinery subunit beta sliding clamp DnaN. Interacts with YabA via domain IIIa (residues 109-275). Isolated domain I forms a 1:1 complex with SirA. Interacts with Soj, probably via domain III. Interacts via domains I and III with CcrZ. Interacts via domain IV with skin prophage-like element protein YqaH.

Its subcellular location is the cytoplasm. It is found in the nucleoid. The catalysed reaction is ATP + H2O = ADP + phosphate + H(+). Oligomerization of DnaA can be controlled by Soj; monomeric ADP-Soj inhibits formation of the DnaA helix. YabA prevents the cooperative binding of DnaA-ATP to oriC-containing sequences; increased levels of DnaN (beta sliding clamp subunit of DNA polymerase) removes YabA from association with DnaA on the chromosome, enabling increased association of DnaA with its chromosomal binding sites. Both Soj and YabA chase DnaA from oriC site, YabA tethers DnaA to the DNA replication fork via the beta sliding clamp subunit DnaN. SirA antagonizes the ability of DnaA to bind to the replication origin, and thus decreases replication inititation during sporulation. Small protein YqaH, part of the skin prophage-like element, binds to DnaA and antagonizes its replication initiation and transcriptional regulation activities. Its function is as follows. Plays an essential role in the initiation and regulation of chromosomal replication. ATP-DnaA binds to the origin of replication (oriC) to initiate formation of the DNA replication initiation complex once per cell cycle. Binds directly to oriC at a 9 bp consensus (DnaA box): 5'-TTATCCACA-3' and separates the double-stranded (ds)DNA. Forms a right-handed helical filament on oriC DNA; dsDNA binds to the exterior of the filament while single-stranded (ss)DNA is stabilized in the filament's interior. The ATP-DnaA-oriC complex binds and stabilizes one strand of the AT-rich DNA unwinding element (DUE or basal unwinding system, BUS), permitting loading of DNA polymerase. Binds ATP with high affinity, ADP with lower affinity, but not AMP, cAMP or cGMP; ATP stimulates binding to DnaA boxes. Once bound promotes sequence-specific strand separation of DnaA-trios (3'-GAT-5' consensus) adjacent to oriC in the presence of ATP but not ADP. Domains III and IV are sufficient to separate dsDNA strands. The 'initiator specific motif' (ISM) of domain III contacts the middle adenine residue of the DnaA-trio probably stretching and stabilizing ssDNA. DnaA-trio recognition is co-operative and depends on DnaA self-assembly. The ssDNA serves as an assembly region for the replication machinery. Tethered to DnaN (beta sliding clamp subunit of DNA polymerase) and thus replication forks by YabA. During replication initiation DnaA-ATP binds cooperatively to sequences in oriC. YabA prevents this cooperative binding while still allowing DnaA to bind DNA. During the cell cycle an initial phase occurs in which DnaA is associated with origin regions, then the origin regions become spatially separate from the centrally sequestered DnaA molecules, and most DnaA molecules are unable to reassociate with origin regions. Does not require YabA to bind DNA. During sporulation SirA prevents DnaA association with the replication origin to prevent excessive chromosome replication. Overexpression induces the SOS response; increasing expression of downstream dnaN blocks this induction. Over-initiation of DNA replication is very deleterious; isolated suppressors in relA, ndrR, dnaC, cshA and crrZ increase replication elongation, decrease replication inititation or lead to a decrease in the replicative DNA helicase. Binds acidic phospholipids. Functionally, the half-life of ADP-DnaA is 1.5 minutes, of ATP-DnaA is 5 minutes at 37 degrees Celsius; in E.coli the half-life of ADP-DnaA is about 45 minutes. In terms of biological role, also acts as a transcriptional regulator. DnaA inhibits its own gene expression. DnaA binds specifically to the promoter regions of at least 20 operons (56 genes), including itself, sda and dnaB, and probably controls their expression in response to DNA replication inhibition. The chain is Chromosomal replication initiator protein DnaA from Bacillus subtilis (strain 168).